A 252-amino-acid chain; its full sequence is Probable phosphatase Shewana3_2794 (252 aa).

Residues His8, His10, His16, His41, Glu74, His102, His132, Asp193, and His195 each coordinate Zn(2+).

It belongs to the PHP family. Zn(2+) serves as cofactor.

This is Probable phosphatase Shewana3_2794 from Shewanella sp. (strain ANA-3).